The following is a 396-amino-acid chain: Elongation factor Tu (396 aa).

The 196-residue stretch at 10 to 205 (KSHANIGTIG…AVDEYIPTPE (196 aa)) folds into the tr-type G domain. The tract at residues 19-26 (GHVDHGKT) is G1. Residue 19 to 26 (GHVDHGKT) participates in GTP binding. A Mg(2+)-binding site is contributed by Thr-26. The tract at residues 61–65 (GITIS) is G2. A G3 region spans residues 82 to 85 (DCPG). Residues 82–86 (DCPGH) and 137–140 (NKCD) contribute to the GTP site. Positions 137-140 (NKCD) are G4. The tract at residues 175 to 177 (SAL) is G5.

Belongs to the TRAFAC class translation factor GTPase superfamily. Classic translation factor GTPase family. EF-Tu/EF-1A subfamily. As to quaternary structure, monomer.

Its subcellular location is the cytoplasm. It catalyses the reaction GTP + H2O = GDP + phosphate + H(+). In terms of biological role, GTP hydrolase that promotes the GTP-dependent binding of aminoacyl-tRNA to the A-site of ribosomes during protein biosynthesis. The sequence is that of Elongation factor Tu from Bacillus velezensis (strain DSM 23117 / BGSC 10A6 / LMG 26770 / FZB42) (Bacillus amyloliquefaciens subsp. plantarum).